Here is a 363-residue protein sequence, read N- to C-terminus: Anhydro-N-acetylmuramic acid kinase (363 aa).

10–17 (GTSLDGLD) is an ATP binding site.

This sequence belongs to the anhydro-N-acetylmuramic acid kinase family.

It carries out the reaction 1,6-anhydro-N-acetyl-beta-muramate + ATP + H2O = N-acetyl-D-muramate 6-phosphate + ADP + H(+). The protein operates within amino-sugar metabolism; 1,6-anhydro-N-acetylmuramate degradation. Its pathway is cell wall biogenesis; peptidoglycan recycling. In terms of biological role, catalyzes the specific phosphorylation of 1,6-anhydro-N-acetylmuramic acid (anhMurNAc) with the simultaneous cleavage of the 1,6-anhydro ring, generating MurNAc-6-P. Is required for the utilization of anhMurNAc either imported from the medium or derived from its own cell wall murein, and thus plays a role in cell wall recycling. Contributes to intrinsic fosfomycin resistance in P.putida. This Pseudomonas putida (strain ATCC 47054 / DSM 6125 / CFBP 8728 / NCIMB 11950 / KT2440) protein is Anhydro-N-acetylmuramic acid kinase.